A 214-amino-acid polypeptide reads, in one-letter code: Orotate phosphoribosyltransferase (214 aa).

Residue K26 participates in 5-phospho-alpha-D-ribose 1-diphosphate binding. F34 to F35 is an orotate binding site. Residues Y72–K73, R99, K100, K103, H105, and D124–A132 contribute to the 5-phospho-alpha-D-ribose 1-diphosphate site. Positions 128 and 156 each coordinate orotate.

This sequence belongs to the purine/pyrimidine phosphoribosyltransferase family. PyrE subfamily. As to quaternary structure, homodimer. Mg(2+) is required as a cofactor.

It catalyses the reaction orotidine 5'-phosphate + diphosphate = orotate + 5-phospho-alpha-D-ribose 1-diphosphate. It functions in the pathway pyrimidine metabolism; UMP biosynthesis via de novo pathway; UMP from orotate: step 1/2. Catalyzes the transfer of a ribosyl phosphate group from 5-phosphoribose 1-diphosphate to orotate, leading to the formation of orotidine monophosphate (OMP). This Proteus mirabilis (strain HI4320) protein is Orotate phosphoribosyltransferase.